A 587-amino-acid polypeptide reads, in one-letter code: Putative gustatory receptor 59b (587 aa).

Residues 1 to 4 (MPSY) lie on the Cytoplasmic side of the membrane. The chain crosses the membrane as a helical span at residues 5–25 (MAFTPYIMFSTNYAAIAYILI). Residues 26-62 (SRCYRDSMLLDLQRITLEVNREMLRTGKKMNSLIRRM) are Extracellular-facing. The chain crosses the membrane as a helical span at residues 63-83 (FFLKTFTLTYSCLSYILAVLV). The Cytoplasmic portion of the chain corresponds to 84-97 (YQWRAQNWSNLFNG). Residues 98–118 (LLVNISLTILVVTTFFYFVSL) form a helical membrane-spanning segment. Residues 119-277 (MHVARGFDFV…CGLYPVNKAK (159 aa)) lie on the Extracellular side of the membrane. N159 carries an N-linked (GlcNAc...) asparagine glycan. A helical transmembrane segment spans residues 278–298 (WLEMVASIVVHSIMLFQFHLV). The Cytoplasmic segment spans residues 299 to 309 (MRGGYTTLFSR). A helical membrane pass occupies residues 310–330 (TYALLANIITLTMLPIVMWQV). Residues 331–403 (RSVFLAKRHY…GIDGVRRSLR (73 aa)) are Extracellular-facing. The helical transmembrane segment at 404-424 (ILLFVKFFTLSWLCITDIIFL) threads the bilayer. Residues 425–518 (FYSSDAVIWV…IYAPQMLATR (94 aa)) are Cytoplasmic-facing. A helical membrane pass occupies residues 519-539 (FDHFVIGVIQAYWGAVFTFDL). At 540–587 (STSFLWVVYGSVQYHVRSLDYYLIDYMCDVAVEYHDSARHSWSEKECY) the chain is on the extracellular side.

Belongs to the insect chemoreceptor superfamily. Gustatory receptor (GR) family. Gr22e subfamily.

The protein resides in the cell membrane. Its function is as follows. Probable gustatory receptor which mediates acceptance or avoidance behavior, depending on its substrates. In Drosophila erecta (Fruit fly), this protein is Putative gustatory receptor 59b.